The sequence spans 479 residues: RAC-gamma serine/threonine-protein kinase (479 aa).

An N-acetylserine modification is found at S2. In terms of domain architecture, PH spans 5–107 (TIVKEGWVQK…WTEAIQAVAD (103 aa)). An intrachain disulfide couples C59 to C76. One can recognise a Protein kinase domain in the interval 148-405 (FDYLKLLGKG…AKEIMRHSFF (258 aa)). Residues 154–162 (LGKGTFGKV) and K177 each bind ATP. The active-site Proton acceptor is the D271. A disulfide bond links C293 and C307. A glycan (O-linked (GlcNAc) threonine) is linked at T302. The residue at position 305 (T305) is a Phosphothreonine; by PDPK1. T309 is a glycosylation site (O-linked (GlcNAc) threonine). In terms of domain architecture, AGC-kinase C-terminal spans 406-479 (SGVNWQDVYD…QFSYSASGRE (74 aa)). T447 carries the post-translational modification Phosphothreonine. The segment at 458-479 (DCMDNERRPHFPQFSYSASGRE) is disordered. Residue S472 is modified to Phosphoserine; by PKC/PRKCZ. O-linked (GlcNAc) serine; alternate glycosylation occurs at S472.

The protein belongs to the protein kinase superfamily. AGC Ser/Thr protein kinase family. RAC subfamily. In terms of assembly, interacts (via PH domain) with TCL1A; this enhances AKT3 phosphorylation and activation. Interacts with TRAF6. Interacts with KCTD20. Interacts with BTBD10. In terms of processing, phosphorylation on Thr-305 and Ser-472 is required for full activity. Phosphorylation of the activation loop at Thr-305 by PDPK1/PDK1 is a prerequisite for full activation. Phosphorylation at Ser-472 by mTORC2 in response to growth factors plays a key role in AKT1 activation by facilitating subsequent phosphorylation of the activation loop by PDPK1/PDK1. Post-translationally, ubiquitinated. When fully phosphorylated and translocated into the nucleus, undergoes 'Lys-48'-polyubiquitination catalyzed by TTC3, leading to its degradation by the proteasome. O-GlcNAcylation at Thr-302 and Thr-309 inhibits activating phosphorylation at Thr-305 via disrupting the interaction between AKT and PDPK1/PDK1. In adult tissues, it is highly expressed in brain, lung and kidney, but weakly in heart, testis and liver. In fetal tissues, it is highly expressed in heart, liver and brain and not at all in kidney.

It localises to the nucleus. The protein localises to the cytoplasm. It is found in the membrane. It catalyses the reaction L-seryl-[protein] + ATP = O-phospho-L-seryl-[protein] + ADP + H(+). The enzyme catalyses L-threonyl-[protein] + ATP = O-phospho-L-threonyl-[protein] + ADP + H(+). Its activity is regulated as follows. Two specific sites, one in the kinase domain (Thr-305) and the other in the C-terminal regulatory region (Ser-472), need to be phosphorylated for its full activation. IGF-1 leads to the activation of AKT3, which may play a role in regulating cell survival. Its function is as follows. AKT3 is one of 3 closely related serine/threonine-protein kinases (AKT1, AKT2 and AKT3) called the AKT kinase, and which regulate many processes including metabolism, proliferation, cell survival, growth and angiogenesis. This is mediated through serine and/or threonine phosphorylation of a range of downstream substrates. Over 100 substrate candidates have been reported so far, but for most of them, no isoform specificity has been reported. AKT3 is the least studied AKT isoform. It plays an important role in brain development and is crucial for the viability of malignant glioma cells. AKT3 isoform may also be the key molecule in up-regulation and down-regulation of MMP13 via IL13. Required for the coordination of mitochondrial biogenesis with growth factor-induced increases in cellular energy demands. Down-regulation by RNA interference reduces the expression of the phosphorylated form of BAD, resulting in the induction of caspase-dependent apoptosis. The protein is RAC-gamma serine/threonine-protein kinase (AKT3) of Homo sapiens (Human).